The primary structure comprises 58 residues: Large ribosomal subunit protein eL24 (58 aa).

The Zn(2+) site is built by Cys-6, Cys-9, Cys-32, and Cys-36. The C4-type zinc finger occupies 6–36; that stretch reads CSFCGYDIEPGTGKMYVRRDGRVFYFCSGKC.

This sequence belongs to the eukaryotic ribosomal protein eL24 family. As to quaternary structure, part of the 50S ribosomal subunit. Forms a cluster with proteins L3 and L14. Requires Zn(2+) as cofactor.

In terms of biological role, binds to the 23S rRNA. This Archaeoglobus fulgidus (strain ATCC 49558 / DSM 4304 / JCM 9628 / NBRC 100126 / VC-16) protein is Large ribosomal subunit protein eL24.